A 76-amino-acid polypeptide reads, in one-letter code: MRFYIGLMAALMLTSILRTDSASVDQTGAEGGLALIERVIRQRDAADVKPVARTNEGPGRDPAPCCQHPIETCCRR.

A signal peptide spans 1 to 22; sequence MRFYIGLMAALMLTSILRTDSA. A propeptide spanning residues 23–42 is cleaved from the precursor; that stretch reads SVDQTGAEGGLALIERVIRQ. A 4-hydroxyproline modification is found at Pro50. Pro58 bears the 4-hydroxyproline; in form cal5a, and form cal5b mark. Pro62 bears the 4-hydroxyproline; in form cal5a, form cal5b, and form cal5c mark. A 4-hydroxyproline; in form cal5a, form cal5b, form cal5c, and form cal5d modification is found at Pro64.

Post-translationally, contains 2 disulfide bonds that can be either 'C1-C3, C2-C4' or 'C1-C4, C2-C3', since these disulfide connectivities have been observed for conotoxins with cysteine framework V (for examples, see AC P0DQQ7 and AC P81755). Five different peptides have been described after total venom examination by HPLC-MS. Cal5a is the longest. Cal5b-Cal5e are identical in length but are differentially hydroxylated. It is possible that hydroxylation and proteolysis at position 53 are incomplete in some of these peptides. As to expression, expressed by the venom duct.

It is found in the secreted. Functionally, probable neurotoxin with unknown target. Possibly targets ion channels. This chain is Conotoxin Cal5a L1, found in Californiconus californicus (California cone).